The chain runs to 903 residues: DNA mismatch repair protein MutS (903 aa).

A disordered region spans residues 1 to 89 (MPRSASQPPD…DEPAWGHHSQ (89 aa)). Composition is skewed to low complexity over residues 20-36 (APEP…SEPE) and 49-62 (ADAA…QATA). 719–726 (GPNASGKS) lines the ATP pocket.

This sequence belongs to the DNA mismatch repair MutS family.

This protein is involved in the repair of mismatches in DNA. It is possible that it carries out the mismatch recognition step. This protein has a weak ATPase activity. This chain is DNA mismatch repair protein MutS, found in Synechococcus sp. (strain CC9605).